The chain runs to 1077 residues: Disheveled-associated activator of morphogenesis 1 (1077 aa).

A Phosphoserine modification is found at Ser34. One can recognise a GBD/FH3 domain in the interval Leu45–Gln420. Positions Arg437–Ala526 form a coiled coil. Disordered regions lie at residues Lys457 to Gln478 and Ala526 to Leu596. The FH1 domain maps to Pro528–Lys599. Pro residues-rich tracts occupy residues Gly530–Pro539 and Leu549–Ala592. Residues Lys600–Gln1008 form the FH2 domain. The tract at residues Gln693–Leu702 is actin-binding. The span at Ala1007–Ser1026 shows a compositional bias: basic and acidic residues. 2 disordered regions span residues Ala1007–Asp1033 and Arg1056–Phe1077. 2 positions are modified to phosphoserine: Ser1026 and Ser1029. Residues Ser1026–Lys1057 form the DAD domain. The span at Ser1066–Phe1077 shows a compositional bias: basic and acidic residues.

The protein belongs to the formin homology family. In terms of assembly, interacts with CIP4, FNBP1 and FNBP1L. Interacts with the SH3 domains of Abl, BTK, endophilin, spectrin and SRC. Binds specifically to GTP-bound CDC42 and RHOA. Interacts with INTU; INTU mediates the indirect interaction between DAAM1 and NPHP4. Interacts (via coiled coil domain) with KANK1 (via coiled coil domain). As to expression, in early embryogenesis, expressed in embryonic and extraembryonic ectoderm. In later stages of gastrulation, expressed also in somites and ribs and posterior vertebrae of developing skeletal system. During organogenesis, expressed in CNS, PNS, stomach, liver and limb bud.

It is found in the cytoplasm. The protein localises to the cytoskeleton. It localises to the cilium basal body. Functionally, binds to disheveled (Dvl) and Rho, and mediates Wnt-induced Dvl-Rho complex formation. May play a role as a scaffolding protein to recruit Rho-GDP and Rho-GEF, thereby enhancing Rho-GTP formation. Can direct nucleation and elongation of new actin filaments. Involved in building functional cilia. Involved in the organization of the subapical actin network in multiciliated epithelial cells. Together with DAAM2, required for myocardial maturation and sarcomere assembly. During cell division, may regulate RHOA activation that signals spindle orientation and chromosomal segregation. The chain is Disheveled-associated activator of morphogenesis 1 (Daam1) from Mus musculus (Mouse).